The following is a 700-amino-acid chain: Polyribonucleotide nucleotidyltransferase (700 aa).

Mg(2+) contacts are provided by aspartate 491 and aspartate 497. Positions 558-617 (PNYAVIEINPDKIRDVIGKGGATIRQLTEETGAVIDIDDAGTIRIFGENKAATKAAIAKI) constitute a KH domain. Positions 627–695 (GKTYEGTVAR…NRGRIKLTMK (69 aa)) constitute an S1 motif domain.

The protein belongs to the polyribonucleotide nucleotidyltransferase family. Component of the RNA degradosome, which is a multiprotein complex involved in RNA processing and mRNA degradation. Mg(2+) serves as cofactor.

Its subcellular location is the cytoplasm. It catalyses the reaction RNA(n+1) + phosphate = RNA(n) + a ribonucleoside 5'-diphosphate. Involved in mRNA degradation. Catalyzes the phosphorolysis of single-stranded polyribonucleotides processively in the 3'- to 5'-direction. In Psychrobacter cryohalolentis (strain ATCC BAA-1226 / DSM 17306 / VKM B-2378 / K5), this protein is Polyribonucleotide nucleotidyltransferase.